The chain runs to 226 residues: Glyceraldehyde 3-phosphate phosphatase (226 aa).

The protein belongs to the HAD-like hydrolase superfamily. It depends on Mg(2+) as a cofactor.

Its function is as follows. Catalyzes the dephosphorylation of D,L-glyceraldehyde 3-phosphate in vitro. The protein is Glyceraldehyde 3-phosphate phosphatase of Methanothermobacter thermautotrophicus (strain ATCC 29096 / DSM 1053 / JCM 10044 / NBRC 100330 / Delta H) (Methanobacterium thermoautotrophicum).